The chain runs to 332 residues: uncharacterized protein (332 aa).

It belongs to the peptidase U32 family.

This is an uncharacterized protein from Methanocaldococcus jannaschii (strain ATCC 43067 / DSM 2661 / JAL-1 / JCM 10045 / NBRC 100440) (Methanococcus jannaschii).